The sequence spans 257 residues: Thiazole synthase (257 aa).

The Schiff-base intermediate with DXP role is filled by Lys-96. Residues Gly-157, 184–185, and 206–207 each bind 1-deoxy-D-xylulose 5-phosphate; these read AG and NT.

The protein belongs to the ThiG family. As to quaternary structure, homotetramer. Forms heterodimers with either ThiH or ThiS.

Its subcellular location is the cytoplasm. It catalyses the reaction [ThiS sulfur-carrier protein]-C-terminal-Gly-aminoethanethioate + 2-iminoacetate + 1-deoxy-D-xylulose 5-phosphate = [ThiS sulfur-carrier protein]-C-terminal Gly-Gly + 2-[(2R,5Z)-2-carboxy-4-methylthiazol-5(2H)-ylidene]ethyl phosphate + 2 H2O + H(+). Its pathway is cofactor biosynthesis; thiamine diphosphate biosynthesis. Its function is as follows. Catalyzes the rearrangement of 1-deoxy-D-xylulose 5-phosphate (DXP) to produce the thiazole phosphate moiety of thiamine. Sulfur is provided by the thiocarboxylate moiety of the carrier protein ThiS. In vitro, sulfur can be provided by H(2)S. This Allorhizobium ampelinum (strain ATCC BAA-846 / DSM 112012 / S4) (Agrobacterium vitis (strain S4)) protein is Thiazole synthase.